Here is a 1032-residue protein sequence, read N- to C-terminus: uncharacterized protein (1032 aa).

3 disordered regions span residues 54–80, 391–451, and 884–934; these read NNNN…NNNN, QLQI…QTHL, and INNE…SKVK. Residues 884 to 907 show a composition bias toward low complexity; that stretch reads INNENNNENNNNYNGNINSNNNNN.

This is an uncharacterized protein from Dictyostelium discoideum (Social amoeba).